Reading from the N-terminus, the 230-residue chain is Dickkopf-like protein 1 (230 aa).

The N-terminal stretch at M1 to A20 is a signal peptide. N-linked (GlcNAc...) asparagine glycans are attached at residues N31, N87, and N102.

In terms of assembly, interacts with SLXL1; Co-localize in seminiferous tubules. Interacts with SLY. In terms of processing, N-glycosylated during spermatogenesis. Not N-glycosylated in mature sperm. Testis-specific. Abundant in the seminiferous tubules where it is associated with developing spermatocytes. Expressed only in testis (at protein level). Not detectable on postnatal days 4 and 9 but after day 18 it gradually increased as the development of testes progressed. Expressed at high levels in testis and at weak levels in epididymis.

Its subcellular location is the secreted. The protein localises to the cytoplasmic vesicle. It localises to the secretory vesicle. It is found in the acrosome. Its function is as follows. Involved in fertilization by facilitating sperm penetration of the zona pellucida. May promote spermatocyte apoptosis, thereby limiting sperm production. In adults, may reduce testosterone synthesis in Leydig cells. Is not essential either for development or fertility. This Mus musculus (Mouse) protein is Dickkopf-like protein 1.